The sequence spans 115 residues: Anamorsin homolog 1 (115 aa).

Residues 30–115 are disordered; it reads VKEATKGEDC…KVKLNLTDDI (86 aa). Positions 39, 46, 49, and 51 each coordinate [2Fe-2S] cluster. The segment at 39–51 is fe-S binding site A; the sequence is CTTRRRACKNCTC. 4 residues coordinate [4Fe-4S] cluster: C77, C80, C88, and C91. 2 short sequence motifs (cx2C motif) span residues 77–80 and 88–91; these read CGNC and CATC. Positions 77-91 are fe-S binding site B; that stretch reads CGNCAKGDAFRCATC.

Belongs to the anamorsin family. Monomer. [2Fe-2S] cluster is required as a cofactor. It depends on [4Fe-4S] cluster as a cofactor.

The protein resides in the cytoplasm. It localises to the mitochondrion intermembrane space. Its function is as follows. Component of the cytosolic iron-sulfur (Fe-S) protein assembly (CIA) machinery. Required for the maturation of extramitochondrial Fe-S proteins. Part of an electron transfer chain functioning in an early step of cytosolic Fe-S biogenesis, facilitating the de novo assembly of a [4Fe-4S] cluster on the cytosolic Fe-S scaffold complex. Electrons are transferred from NADPH via a FAD- and FMN-containing diflavin oxidoreductase. Together with the diflavin oxidoreductase, also required for the assembly of the diferric tyrosyl radical cofactor of ribonucleotide reductase (RNR), probably by providing electrons for reduction during radical cofactor maturation in the catalytic small subunit. In Trypanosoma cruzi (strain CL Brener), this protein is Anamorsin homolog 1.